Reading from the N-terminus, the 97-residue chain is Protein YcgL (97 aa).

Residues methionine 1 to leucine 85 form the YcgL domain.

This chain is Protein YcgL, found in Escherichia fergusonii (strain ATCC 35469 / DSM 13698 / CCUG 18766 / IAM 14443 / JCM 21226 / LMG 7866 / NBRC 102419 / NCTC 12128 / CDC 0568-73).